Here is a 721-residue protein sequence, read N- to C-terminus: Centlein (721 aa).

Residues 52–164 (KNEKAISEQT…LRDENEEVVN (113 aa)) adopt a coiled-coil conformation. 2 disordered regions span residues 156–180 (RDENEEVVNPEEKEHCPTDKAKSEM) and 259–288 (ETSQNIRPIENDGNQKETDQTEDSRAQQEV). 2 stretches are compositionally biased toward basic and acidic residues: residues 165-178 (PEEKEHCPTDKAKS) and 267-284 (IENDGNQKETDQTEDSRA). Coiled-coil stretches lie at residues 345 to 515 (LLRE…EDLK) and 573 to 626 (QSEQ…TQKS). Position 658 is a phosphothreonine (threonine 658).

In terms of assembly, interacts with CEP250 and CEP68. Interacts with NEK2; the interaction leads to phosphorylation of CNTLN. Post-translationally, phosphorylated directly or indirectly by NEK2.

Its subcellular location is the cytoplasm. It localises to the cytoskeleton. The protein resides in the microtubule organizing center. It is found in the centrosome. The protein localises to the centriole. Required for centrosome cohesion and recruitment of CEP68 to centrosomes. This Rattus norvegicus (Rat) protein is Centlein.